A 173-amino-acid chain; its full sequence is Ribosome maturation factor RimM (173 aa).

In terms of domain architecture, PRC barrel spans 92–165 (EGEFYHADLI…RVVIEAPAEI (74 aa)).

This sequence belongs to the RimM family. In terms of assembly, binds ribosomal protein uS19.

The protein resides in the cytoplasm. In terms of biological role, an accessory protein needed during the final step in the assembly of 30S ribosomal subunit, possibly for assembly of the head region. Essential for efficient processing of 16S rRNA. May be needed both before and after RbfA during the maturation of 16S rRNA. It has affinity for free ribosomal 30S subunits but not for 70S ribosomes. The protein is Ribosome maturation factor RimM of Nitrobacter winogradskyi (strain ATCC 25391 / DSM 10237 / CIP 104748 / NCIMB 11846 / Nb-255).